The sequence spans 210 residues: Uracil phosphoribosyltransferase (210 aa).

5-phospho-alpha-D-ribose 1-diphosphate-binding positions include Arg78, Arg103, and 130–138 (DPMLATGGS). Residues Ile193 and 198–200 (GDA) contribute to the uracil site. Asp199 lines the 5-phospho-alpha-D-ribose 1-diphosphate pocket.

It belongs to the UPRTase family. It depends on Mg(2+) as a cofactor.

The enzyme catalyses UMP + diphosphate = 5-phospho-alpha-D-ribose 1-diphosphate + uracil. It functions in the pathway pyrimidine metabolism; UMP biosynthesis via salvage pathway; UMP from uracil: step 1/1. Allosterically activated by GTP. In terms of biological role, catalyzes the conversion of uracil and 5-phospho-alpha-D-ribose 1-diphosphate (PRPP) to UMP and diphosphate. The sequence is that of Uracil phosphoribosyltransferase from Chromobacterium violaceum (strain ATCC 12472 / DSM 30191 / JCM 1249 / CCUG 213 / NBRC 12614 / NCIMB 9131 / NCTC 9757 / MK).